A 306-amino-acid polypeptide reads, in one-letter code: tRNA (guanine-N(1)-)-methyltransferase (306 aa).

Residues glycine 157 and 182–187 (IGDYVL) each bind S-adenosyl-L-methionine.

This sequence belongs to the RNA methyltransferase TrmD family. Homodimer.

Its subcellular location is the cytoplasm. The enzyme catalyses guanosine(37) in tRNA + S-adenosyl-L-methionine = N(1)-methylguanosine(37) in tRNA + S-adenosyl-L-homocysteine + H(+). In terms of biological role, specifically methylates guanosine-37 in various tRNAs. This Bifidobacterium adolescentis (strain ATCC 15703 / DSM 20083 / NCTC 11814 / E194a) protein is tRNA (guanine-N(1)-)-methyltransferase.